The following is a 505-amino-acid chain: E3 SUMO-protein ligase PIAS4-A (505 aa).

The 35-residue stretch at Val12 to Val46 folds into the SAP domain. Positions Leu20 to Leu24 match the LXXLL motif motif. A Glycyl lysine isopeptide (Lys-Gly) (interchain with G-Cter in SUMO); alternate cross-link involves residue Lys35. Lys35 participates in a covalent cross-link: Glycyl lysine isopeptide (Lys-Gly) (interchain with G-Cter in SUMO2); alternate. Residues Lys56 and Lys68 each participate in a glycyl lysine isopeptide (Lys-Gly) (interchain with G-Cter in SUMO2) cross-link. A PINIT domain is found at Gly104–Phe264. The segment at Pro296–Glu381 adopts an SP-RING-type zinc-finger fold. Residues Cys327, His329, Cys350, and Cys353 each coordinate Zn(2+). Residues Glu374–Tyr505 form a required for nuclear localization region. Residues Asp395–Arg407 show a composition bias toward basic and acidic residues. The disordered stretch occupies residues Asp395–Tyr505. Positions Ser437 to Thr457 are enriched in gly residues. Residues Thr462–Gln485 are compositionally biased toward acidic residues. Residues Gly493 to Tyr505 are compositionally biased toward basic and acidic residues.

The protein belongs to the PIAS family. Post-translationally, sumoylated. Lys-35 is the main site of sumoylation. Highly expressed in spleen, liver, and brain. Expressed at lower levels in heart, intestine, kidney, gill, skin, and muscle.

It localises to the nucleus. It catalyses the reaction S-ubiquitinyl-[E2 ubiquitin-conjugating enzyme]-L-cysteine + [acceptor protein]-L-lysine = [E2 ubiquitin-conjugating enzyme]-L-cysteine + N(6)-ubiquitinyl-[acceptor protein]-L-lysine.. The protein operates within protein modification; protein sumoylation. Functions as an E3-type small ubiquitin-like modifier (SUMO) ligase. May play a role as a transcriptional coregulator in various cellular pathways. Catalyzes conjugation of SUMO2 to KAT5 in response to DNA damage, facilitating repair of DNA double-strand breaks (DSBs) via homologous recombination (HR). Mediates sumoylation of PARP1 in response to PARP1 trapping to chromatin. Negatively regulates induction of interferon phi 1 (ifnphi1) mediated by mavs and ticam1/trif. Also inhibits ifnphi1-mediated activation of the interferon-stimulated genes (ISGs) pkz and cd40, and to a lesser extent rsad2 and isg15. May inhibit ticam1/trif-mediated activation of NF-kappa-B. This Danio rerio (Zebrafish) protein is E3 SUMO-protein ligase PIAS4-A.